The following is a 233-amino-acid chain: Phytol kinase (233 aa).

The next 6 helical transmembrane spans lie at 9-29, 56-76, 96-118, 122-144, 172-192, and 213-233; these read MALPLWIAVGLAATYLGAVVL, VVLIAWWLSIPGWVGAIAGVF, VGRHSYGTLFYALSIGLLVGGFF, LPIFAAIGILVMAWGDGLAALVG, FLVTVVFLSYTFGFTVIVLVV, and NLTVPLGSALIAWAGSYLWLG.

The protein belongs to the polyprenol kinase family.

The protein resides in the cell membrane. The enzyme catalyses phytol + CTP = phytyl phosphate + CDP + H(+). Its pathway is cofactor biosynthesis; tocopherol biosynthesis. Its function is as follows. Catalyzes the CTP-dependent phosphorylation of phytol to phytylmonophosphate (PMP). Can also use UTP as an alternative phosphate donor, but not ATP or GTP. Is involved in tocopherol biosynthesis, via the utilization of phytol generated by chlorophyll degradation. Also plays a significant but not critical role in the recycling of phytol for the biosynthesis of new chlorophyll molecules. This chain is Phytol kinase, found in Synechocystis sp. (strain ATCC 27184 / PCC 6803 / Kazusa).